Here is a 112-residue protein sequence, read N- to C-terminus: Gastrula zinc finger protein XlCGF16.1 (112 aa).

4 consecutive C2H2-type zinc fingers follow at residues 6–28 (YNCS…QKTH), 34–56 (FVCF…QRIH), 62–84 (FSCT…HKTH), and 90–112 (FLCF…HRTH).

Belongs to the krueppel C2H2-type zinc-finger protein family.

The protein localises to the nucleus. In terms of biological role, may be involved in transcriptional regulation. The sequence is that of Gastrula zinc finger protein XlCGF16.1 from Xenopus laevis (African clawed frog).